The primary structure comprises 175 residues: uncharacterized protein (175 aa).

A run of 2 helical transmembrane segments spans residues Ile21–Ile41 and Leu50–Ile70.

It localises to the membrane. This is an uncharacterized protein from Saccharomyces cerevisiae (strain ATCC 204508 / S288c) (Baker's yeast).